We begin with the raw amino-acid sequence, 77 residues long: Translation initiation factor IF-1, chloroplastic (77 aa).

Residues Met-1–Arg-71 form the S1-like domain.

Belongs to the IF-1 family. In terms of assembly, component of the 30S ribosomal translation pre-initiation complex which assembles on the 30S ribosome in the order IF-2 and IF-3, IF-1 and N-formylmethionyl-tRNA(fMet); mRNA recruitment can occur at any time during PIC assembly.

It localises to the plastid. The protein resides in the chloroplast. Functionally, one of the essential components for the initiation of protein synthesis. Stabilizes the binding of IF-2 and IF-3 on the 30S subunit to which N-formylmethionyl-tRNA(fMet) subsequently binds. Helps modulate mRNA selection, yielding the 30S pre-initiation complex (PIC). Upon addition of the 50S ribosomal subunit IF-1, IF-2 and IF-3 are released leaving the mature 70S translation initiation complex. This chain is Translation initiation factor IF-1, chloroplastic, found in Garrya elliptica (Wavyleaf silktassel).